The chain runs to 235 residues: Small ribosomal subunit protein uS3 (235 aa).

One can recognise a KH type-2 domain in the interval 39 to 107 (VRKFLNKELM…PAQINIAEVK (69 aa)).

This sequence belongs to the universal ribosomal protein uS3 family. As to quaternary structure, part of the 30S ribosomal subunit. Forms a tight complex with proteins S10 and S14.

Binds the lower part of the 30S subunit head. Binds mRNA in the 70S ribosome, positioning it for translation. This Actinobacillus succinogenes (strain ATCC 55618 / DSM 22257 / CCUG 43843 / 130Z) protein is Small ribosomal subunit protein uS3.